Consider the following 495-residue polypeptide: N-succinylglutamate 5-semialdehyde dehydrogenase (495 aa).

An NAD(+)-binding site is contributed by 228-233; the sequence is GSYATG. Active-site residues include Glu-251 and Cys-285.

It belongs to the aldehyde dehydrogenase family. AstD subfamily.

It carries out the reaction N-succinyl-L-glutamate 5-semialdehyde + NAD(+) + H2O = N-succinyl-L-glutamate + NADH + 2 H(+). Its pathway is amino-acid degradation; L-arginine degradation via AST pathway; L-glutamate and succinate from L-arginine: step 4/5. In terms of biological role, catalyzes the NAD-dependent reduction of succinylglutamate semialdehyde into succinylglutamate. In Legionella pneumophila (strain Corby), this protein is N-succinylglutamate 5-semialdehyde dehydrogenase.